A 751-amino-acid chain; its full sequence is Photosystem I P700 chlorophyll a apoprotein A1 (751 aa).

A run of 8 helical transmembrane segments spans residues 73-96 (VFSAHFGQLGIIFIWLSGMYFHGA), 159-182 (LYSTAIGGLVMAAAMFFAGWFHFH), 198-222 (LNHHLSGLLGLGSLAWAGHQIHVSL), 294-312 (TAHHHLAIAVLFIVAGHMY), 349-372 (WHAQLAINLALFGSLSIIVAHHQY), 388-414 (LSLFTHHNWIGGFCIVGAAAHAAIFMI), 436-458 (AIISHLNWVCIFLGFHSFGLYIH), and 533-551 (FLVHHVHAFTIHVTVLILL). Cys-575 and Cys-584 together coordinate [4Fe-4S] cluster. 2 helical membrane passes run 591-612 (HVFLGLFWMYNAISVVIFHFSW) and 665-687 (LSAYGLIFLGAHFVWAFSLMFLF). His-676 is a chlorophyll a' binding site. Chlorophyll a is bound by residues Met-684 and Tyr-692. Trp-693 contacts phylloquinone. The chain crosses the membrane as a helical span at residues 725–745 (AVGVAHYLLGGIATTWSFFLA).

Belongs to the PsaA/PsaB family. In terms of assembly, the PsaA/B heterodimer binds the P700 chlorophyll special pair and subsequent electron acceptors. PSI consists of a core antenna complex that captures photons, and an electron transfer chain that converts photonic excitation into a charge separation. The eukaryotic PSI reaction center is composed of at least 11 subunits. Requires P700 is a chlorophyll a/chlorophyll a' dimer, A0 is one or more chlorophyll a, A1 is one or both phylloquinones and FX is a shared 4Fe-4S iron-sulfur center. as cofactor.

The protein resides in the plastid. It localises to the chloroplast thylakoid membrane. It carries out the reaction reduced [plastocyanin] + hnu + oxidized [2Fe-2S]-[ferredoxin] = oxidized [plastocyanin] + reduced [2Fe-2S]-[ferredoxin]. Functionally, psaA and PsaB bind P700, the primary electron donor of photosystem I (PSI), as well as the electron acceptors A0, A1 and FX. PSI is a plastocyanin/cytochrome c6-ferredoxin oxidoreductase, converting photonic excitation into a charge separation, which transfers an electron from the donor P700 chlorophyll pair to the spectroscopically characterized acceptors A0, A1, FX, FA and FB in turn. Oxidized P700 is reduced on the lumenal side of the thylakoid membrane by plastocyanin or cytochrome c6. In Tupiella akineta (Green alga), this protein is Photosystem I P700 chlorophyll a apoprotein A1.